The chain runs to 1484 residues: Chromosome partition protein MukB (1484 aa).

Gly-34–Ser-41 provides a ligand contact to ATP. Coiled coils occupy residues Leu-326–Gln-418, Leu-444–His-472, and Arg-509–Pro-602. Residues Pro-666–Arg-783 are flexible hinge. Coiled-coil stretches lie at residues Glu-835–Glu-923, Glu-977–Gly-1116, and Val-1209–Val-1265. The interval Ala-1049–Arg-1074 is disordered. Basic and acidic residues predominate over residues Ser-1051 to His-1065.

This sequence belongs to the SMC family. MukB subfamily. Homodimerization via its hinge domain. Binds to DNA via its C-terminal region. Interacts, and probably forms a ternary complex, with MukE and MukF via its C-terminal region. The complex formation is stimulated by calcium or magnesium. Interacts with tubulin-related protein FtsZ.

It localises to the cytoplasm. Its subcellular location is the nucleoid. Functionally, plays a central role in chromosome condensation, segregation and cell cycle progression. Functions as a homodimer, which is essential for chromosome partition. Involved in negative DNA supercoiling in vivo, and by this means organize and compact chromosomes. May achieve or facilitate chromosome segregation by condensation DNA from both sides of a centrally located replisome during cell division. The chain is Chromosome partition protein MukB from Salmonella dublin (strain CT_02021853).